The chain runs to 820 residues: Catenin beta (820 aa).

Positions 1-16 (MEQARYSNQQSVNPQQ) are enriched in polar residues. The interval 1–74 (MEQARYSNQQ…SRHEDGGEEA (74 aa)) is disordered. The segment covering 52–63 (SSATSHPPSVSS) has biased composition (low complexity). ARM repeat units follow at residues 157 to 196 (NYQDDADLATRAIPELTKLLNDDDLVVVNQAAMMVHQLSK), 199 to 239 (ASRH…NLSH), 241 to 280 (RAGLLQIFKSGGIPALIKLLSSPVESVLFYAITTLHNLLL), 283 to 322 (EGSKMAVRLAGGLQKMVALLSRNNPKFLAITTDCLQILAY), 367 to 405 (HNNKPAIVEAGGMSALGLHLGHHSNRLVQNCLWTLRNLS), 406 to 445 (DCHRGTDDIEPLLQMLVQLLASNDINVVTCACGILSNLTC), 448 to 489 (SRNK…HVTS), 495 to 535 (EMGQ…NLAL), 603 to 642 (SHNRALIQGLNCIPLFVQLLYNNIENIQRVAAGVLSELSL), and 644 to 683 (KQGAEMIEQEGATAPLTELLHSRNEGVATYAAAVLYRMSD). Residues 708–811 (PWGDPLDMPS…LDSIPPADNT (104 aa)) are disordered. Residues 785–796 (GMDPGLPDMGPP) show a composition bias toward low complexity.

It belongs to the beta-catenin family.

The protein localises to the cytoplasm. It localises to the cytoskeleton. Its function is as follows. Binds to the cytoplasmic domain of the cell-cell adhesion molecule E-cadherin, and perhaps to other (membrane) proteins. The association of catenins to cadherins produces a complex which is linked to the actin filament network, and which seems to be of primary importance for cadherins cell-adhesion properties. The chain is Catenin beta from Tripneustes gratilla (Hawaian sea urchin).